Reading from the N-terminus, the 485-residue chain is Aspartyl/glutamyl-tRNA(Asn/Gln) amidotransferase subunit B (485 aa).

This sequence belongs to the GatB/GatE family. GatB subfamily. As to quaternary structure, heterotrimer of A, B and C subunits.

The catalysed reaction is L-glutamyl-tRNA(Gln) + L-glutamine + ATP + H2O = L-glutaminyl-tRNA(Gln) + L-glutamate + ADP + phosphate + H(+). The enzyme catalyses L-aspartyl-tRNA(Asn) + L-glutamine + ATP + H2O = L-asparaginyl-tRNA(Asn) + L-glutamate + ADP + phosphate + 2 H(+). In terms of biological role, allows the formation of correctly charged Asn-tRNA(Asn) or Gln-tRNA(Gln) through the transamidation of misacylated Asp-tRNA(Asn) or Glu-tRNA(Gln) in organisms which lack either or both of asparaginyl-tRNA or glutaminyl-tRNA synthetases. The reaction takes place in the presence of glutamine and ATP through an activated phospho-Asp-tRNA(Asn) or phospho-Glu-tRNA(Gln). The polypeptide is Aspartyl/glutamyl-tRNA(Asn/Gln) amidotransferase subunit B (Borrelia hermsii (strain HS1 / DAH)).